Consider the following 89-residue polypeptide: DNA-binding protein HU (89 aa).

This sequence belongs to the bacterial histone-like protein family. As to quaternary structure, homodimer. The dimer interacts with the DNA mimic protein DMP12. It also interacts with the monomeric form of the DNA mimic protein DMP19 with 1:1 stoichiometry.

Its activity is regulated as follows. Activity is regulated by the DNA mimic protein DMP12. Activity is inhibited in the presence of the DNA mimic protein DMP19, which interacts with HU and prevents the binding of HU to DNA. Its function is as follows. Histone-like DNA-binding protein which is capable of wrapping DNA to stabilize it, and thus to prevent its denaturation under extreme environmental conditions. In Neisseria meningitidis serogroup B (strain ATCC BAA-335 / MC58), this protein is DNA-binding protein HU.